The following is a 272-amino-acid chain: Alkaline ceramidase (272 aa).

A run of 2 helical transmembrane segments spans residues 34–54 and 61–81; these read FANT…IMLL and VNGG…ASTY. Residue His83 participates in Zn(2+) binding. 4 consecutive transmembrane segments (helical) span residues 96-116, 124-144, 148-168, and 183-203; these read LSLV…MKWF, LTLV…LCFL, LNAI…NYEG, and ILAL…LCDF. Positions 213 and 217 each coordinate Zn(2+). Residues 214–234 form a helical membrane-spanning segment; sequence ALFHLLAGLAGYTIFIMFSMI. Asn256 is a glycosylation site (N-linked (GlcNAc...) asparagine).

The protein belongs to the alkaline ceramidase family. Zn(2+) is required as a cofactor.

The protein localises to the membrane. The catalysed reaction is an N-acyl-sphingoid base + H2O = a sphingoid base + a fatty acid. The enzyme catalyses an N-acylsphing-4-enine + H2O = sphing-4-enine + a fatty acid. It catalyses the reaction an N-acyl-15-methylhexadecasphing-4-enine + H2O = 15-methylhexadecasphing-4-enine + a fatty acid. Its pathway is lipid metabolism; sphingolipid metabolism. Hydrolyzes the sphingolipid ceramide into sphingoid base and free fatty acid. C.elegans contain specific sphingoid bases, which are unique or different in structure compared to the sphingoid bases found in other animals. Two examples of these distinctive compounds are: 15-methylhexadecasphinganine and 15-methylhexadecasphing-4-enine. The chain is Alkaline ceramidase from Caenorhabditis elegans.